Reading from the N-terminus, the 93-residue chain is Progonadoliberin-2 (93 aa).

Positions 1–24 are cleaved as a signal peptide; the sequence is MACQRHLLFLLLVLFAVSTQLSHG. Pyrrolidone carboxylic acid is present on Gln-25. Glycine amide is present on Gly-34.

The protein belongs to the GnRH family. As to expression, midbrain and hindbrain.

The protein localises to the secreted. Functionally, stimulates the secretion of gonadotropins. This chain is Progonadoliberin-2 (gnrh2), found in Aquarana catesbeiana (American bullfrog).